A 164-amino-acid polypeptide reads, in one-letter code: NADH-quinone oxidoreductase subunit I (164 aa).

2 consecutive 4Fe-4S ferredoxin-type domains span residues 55-85 (LRRY…IDAE) and 95-124 (TRYD…EGPN). [4Fe-4S] cluster-binding residues include Cys65, Cys68, Cys71, Cys75, Cys104, Cys107, Cys110, and Cys114.

It belongs to the complex I 23 kDa subunit family. NDH-1 is composed of 14 different subunits. Subunits NuoA, H, J, K, L, M, N constitute the membrane sector of the complex. It depends on [4Fe-4S] cluster as a cofactor.

The protein localises to the cell inner membrane. The enzyme catalyses a quinone + NADH + 5 H(+)(in) = a quinol + NAD(+) + 4 H(+)(out). Functionally, NDH-1 shuttles electrons from NADH, via FMN and iron-sulfur (Fe-S) centers, to quinones in the respiratory chain. The immediate electron acceptor for the enzyme in this species is believed to be ubiquinone. Couples the redox reaction to proton translocation (for every two electrons transferred, four hydrogen ions are translocated across the cytoplasmic membrane), and thus conserves the redox energy in a proton gradient. This Roseobacter denitrificans (strain ATCC 33942 / OCh 114) (Erythrobacter sp. (strain OCh 114)) protein is NADH-quinone oxidoreductase subunit I.